Consider the following 532-residue polypeptide: CTP synthase (532 aa).

Positions 1–267 (MTKFIFVTGG…DDIVLKILGL (267 aa)) are amidoligase domain. Ser13 is a binding site for CTP. Residue Ser13 participates in UTP binding. 14 to 19 (SLGKGI) provides a ligand contact to ATP. Tyr54 is a binding site for L-glutamine. ATP is bound at residue Asp71. 2 residues coordinate Mg(2+): Asp71 and Glu141. Residues 148–150 (DIE), 188–193 (KTKPTQ), and Lys224 contribute to the CTP site. UTP contacts are provided by residues 188-193 (KTKPTQ) and Lys224. In terms of domain architecture, Glutamine amidotransferase type-1 spans 292–532 (EIAIVGKYVE…EFVKATLANR (241 aa)). Gly354 lines the L-glutamine pocket. Residue Cys381 is the Nucleophile; for glutamine hydrolysis of the active site. Residues 382–385 (LGMQ), Glu405, and Arg462 contribute to the L-glutamine site. Residues His507 and Glu509 contribute to the active site.

The protein belongs to the CTP synthase family. As to quaternary structure, homotetramer.

The catalysed reaction is UTP + L-glutamine + ATP + H2O = CTP + L-glutamate + ADP + phosphate + 2 H(+). The enzyme catalyses L-glutamine + H2O = L-glutamate + NH4(+). It carries out the reaction UTP + NH4(+) + ATP = CTP + ADP + phosphate + 2 H(+). The protein operates within pyrimidine metabolism; CTP biosynthesis via de novo pathway; CTP from UDP: step 2/2. Allosterically activated by GTP, when glutamine is the substrate; GTP has no effect on the reaction when ammonia is the substrate. The allosteric effector GTP functions by stabilizing the protein conformation that binds the tetrahedral intermediate(s) formed during glutamine hydrolysis. Inhibited by the product CTP, via allosteric rather than competitive inhibition. Functionally, catalyzes the ATP-dependent amination of UTP to CTP with either L-glutamine or ammonia as the source of nitrogen. Regulates intracellular CTP levels through interactions with the four ribonucleotide triphosphates. The sequence is that of CTP synthase from Desulfitobacterium hafniense (strain Y51).